Consider the following 288-residue polypeptide: tRNA (guanine-N(1)-)-methyltransferase (288 aa).

The interval 82–105 is disordered; the sequence is ATDAVDTSDPGDSAAPDSSAPSGA. The segment covering 89–105 has biased composition (low complexity); it reads SDPGDSAAPDSSAPSGA. Residues G137 and 162-167 each bind S-adenosyl-L-methionine; that span reads IGDYVL.

This sequence belongs to the RNA methyltransferase TrmD family. As to quaternary structure, homodimer.

Its subcellular location is the cytoplasm. It carries out the reaction guanosine(37) in tRNA + S-adenosyl-L-methionine = N(1)-methylguanosine(37) in tRNA + S-adenosyl-L-homocysteine + H(+). Functionally, specifically methylates guanosine-37 in various tRNAs. The polypeptide is tRNA (guanine-N(1)-)-methyltransferase (Bifidobacterium longum (strain DJO10A)).